Reading from the N-terminus, the 403-residue chain is MQLKIYSSNKNYIQRGTKAFTEVTIAFFLAGFSTFSTLYCVQPILFLFSKEFSLNPAQSSLSLSASTAMMAFGMLFTGPLSDSIGRKVVMSSSLFLASFCTFCCSNMNSWESIIFMRALTGLALSGVAAVAMTYLSEEMHPSVLSFSIGLYISGNTIGGFLGRFLSSLFSEYFSWNIALEFISFLAFTSAVLFVYLLPKSKNFCSSPLDLRKILLYFIFQWRDPVLSKLFFMGCILMGSFITLFNYVGYRLISQPFFLGQTTIGLLSIIYLIGVYSSPQAGVLIERYRKGVILTLALTMMIFGVLITQCNIVLLIIVGLTLFAAGFFAAHSVTSTWISQCSKINKGSTSSIYLFSYYLGSSIFGTFSGIFWITEKWLGISIFIITFLCIGILLSIRLLQYKNI.

12 consecutive transmembrane segments (helical) span residues 25–47, 62–81, 88–110, 114–136, 143–165, 175–197, 229–251, 256–278, 290–307, 311–330, 350–372, and 376–398; these read IAFFLAGFSTFSTLYCVQPILFL, SLSASTAMMAFGMLFTGPLS, VVMSSSLFLASFCTFCCSNMNSW, IFMRALTGLALSGVAAVAMTYLS, VLSFSIGLYISGNTIGGFLGRFL, WNIALEFISFLAFTSAVLFVYLL, LFFMGCILMGSFITLFNYVGYRL, FFLGQTTIGLLSIIYLIGVYSSP, GVILTLALTMMIFGVLIT, IVLLIIVGLTLFAAGFFAAH, SIYLFSYYLGSSIFGTFSGIFWI, and WLGISIFIITFLCIGILLSIRLL.

This sequence belongs to the major facilitator superfamily.

Its subcellular location is the cell membrane. This is an uncharacterized protein from Buchnera aphidicola subsp. Baizongia pistaciae (strain Bp).